The sequence spans 382 residues: Histidinol-phosphate aminotransferase (382 aa).

An N6-(pyridoxal phosphate)lysine modification is found at lysine 215. The interval 363–382 (NIDNQNKTYSQTSSIRKGTI) is disordered.

Belongs to the class-II pyridoxal-phosphate-dependent aminotransferase family. Histidinol-phosphate aminotransferase subfamily. As to quaternary structure, homodimer. It depends on pyridoxal 5'-phosphate as a cofactor.

The enzyme catalyses L-histidinol phosphate + 2-oxoglutarate = 3-(imidazol-4-yl)-2-oxopropyl phosphate + L-glutamate. Its pathway is amino-acid biosynthesis; L-histidine biosynthesis; L-histidine from 5-phospho-alpha-D-ribose 1-diphosphate: step 7/9. This chain is Histidinol-phosphate aminotransferase, found in Yersinia pestis bv. Antiqua (strain Antiqua).